Here is a 413-residue protein sequence, read N- to C-terminus: Tubby-like F-box protein 6 (413 aa).

In terms of domain architecture, F-box spans 67–122; the sequence is SIWVDLPPELLLDIIQRIESEQSLWPGRRDVVACASVCKSWREMTKEVVKVPELSG.

This sequence belongs to the TUB family. Ubiquitous, with higher levels in flowers.

This is Tubby-like F-box protein 6 from Arabidopsis thaliana (Mouse-ear cress).